The sequence spans 397 residues: ATP-dependent RNA helicase eIF4A (397 aa).

The short motif at 24 to 52 (DSFDEMNLKPELLRGIYAYGFERPSAIQQ) is the Q motif element. In terms of domain architecture, Helicase ATP-binding spans 55–225 (IMPVIKGHDV…TKFMREPVRI (171 aa)). 68–75 (AQSGTGKT) is an ATP binding site. The short motif at 173 to 176 (DEAD) is the DEAD box element. A Helicase C-terminal domain is found at 236 to 397 (GIKQFYIAVE…EMPMNVADLI (162 aa)).

The protein belongs to the DEAD box helicase family. eIF4A subfamily. As to quaternary structure, component of the eIF4F complex, which composition varies with external and internal environmental conditions. It is composed of at least eIF4A, eIF4E and eIF4G.

It is found in the cytoplasm. It catalyses the reaction ATP + H2O = ADP + phosphate + H(+). In terms of biological role, ATP-dependent RNA helicase which is a subunit of the eIF4F complex involved in cap recognition and is required for mRNA binding to ribosome. In the current model of translation initiation, eIF4A unwinds RNA secondary structures in the 5'-UTR of mRNAs which is necessary to allow efficient binding of the small ribosomal subunit, and subsequent scanning for the initiator codon. The sequence is that of ATP-dependent RNA helicase eIF4A (tif-1) from Neurospora crassa (strain ATCC 24698 / 74-OR23-1A / CBS 708.71 / DSM 1257 / FGSC 987).